A 435-amino-acid chain; its full sequence is Serine--tRNA ligase (435 aa).

237–239 (TAE) is an L-serine binding site. An ATP-binding site is contributed by 268–270 (RSE). Glu-291 provides a ligand contact to L-serine. Residue 355–358 (EISS) participates in ATP binding. Ser-390 contributes to the L-serine binding site.

It belongs to the class-II aminoacyl-tRNA synthetase family. Type-1 seryl-tRNA synthetase subfamily. As to quaternary structure, homodimer. The tRNA molecule binds across the dimer.

The protein localises to the cytoplasm. The catalysed reaction is tRNA(Ser) + L-serine + ATP = L-seryl-tRNA(Ser) + AMP + diphosphate + H(+). It carries out the reaction tRNA(Sec) + L-serine + ATP = L-seryl-tRNA(Sec) + AMP + diphosphate + H(+). It functions in the pathway aminoacyl-tRNA biosynthesis; selenocysteinyl-tRNA(Sec) biosynthesis; L-seryl-tRNA(Sec) from L-serine and tRNA(Sec): step 1/1. Functionally, catalyzes the attachment of serine to tRNA(Ser). Is also able to aminoacylate tRNA(Sec) with serine, to form the misacylated tRNA L-seryl-tRNA(Sec), which will be further converted into selenocysteinyl-tRNA(Sec). This chain is Serine--tRNA ligase, found in Lactobacillus acidophilus (strain ATCC 700396 / NCK56 / N2 / NCFM).